Consider the following 714-residue polypeptide: ATP-dependent RNA helicase MSS116, mitochondrial (714 aa).

The transit peptide at 1–37 (MSWVRSVAIRTALCRQVRSRYQSYGSTRLFSSSLRSW) directs the protein to the mitochondrion. The Q motif motif lies at 74–102 (SLEASRKFDKSIFRGLYNSKMKNMTVVQQ). The 191-residue stretch at 106–296 (MPMMDTKTGV…HETIGKEYEY (191 aa)) folds into the Helicase ATP-binding domain. An ATP-binding site is contributed by 119–126 (AKTGTGKT). The DEAD box motif lies at 234–237 (DEAD). The Helicase C-terminal domain occupies 335–498 (HINDKYFKAI…TSPDHFQRLG (164 aa)). A disordered region spans residues 581 to 714 (SSNDRKSKRT…TYGRRDDSDE (134 aa)). Composition is skewed to basic and acidic residues over residues 619–640 (RSFD…DRKS), 656–671 (YGDK…DKSY), and 679–697 (SNDR…EKRN).

This sequence belongs to the DEAD box helicase family. DDX18/HAS1 subfamily.

The protein localises to the mitochondrion matrix. It catalyses the reaction ATP + H2O = ADP + phosphate + H(+). Its function is as follows. ATP-dependent RNA helicase required for mitochondrial splicing of group I and II introns. Also required for efficient mitochondrial translation. The sequence is that of ATP-dependent RNA helicase MSS116, mitochondrial (MSS116) from Meyerozyma guilliermondii (strain ATCC 6260 / CBS 566 / DSM 6381 / JCM 1539 / NBRC 10279 / NRRL Y-324) (Yeast).